Reading from the N-terminus, the 145-residue chain is D-aminoacyl-tRNA deacylase (145 aa).

Positions G137–P138 match the Gly-cisPro motif, important for rejection of L-amino acids motif.

Belongs to the DTD family. Homodimer.

Its subcellular location is the cytoplasm. It catalyses the reaction glycyl-tRNA(Ala) + H2O = tRNA(Ala) + glycine + H(+). The catalysed reaction is a D-aminoacyl-tRNA + H2O = a tRNA + a D-alpha-amino acid + H(+). In terms of biological role, an aminoacyl-tRNA editing enzyme that deacylates mischarged D-aminoacyl-tRNAs. Also deacylates mischarged glycyl-tRNA(Ala), protecting cells against glycine mischarging by AlaRS. Acts via tRNA-based rather than protein-based catalysis; rejects L-amino acids rather than detecting D-amino acids in the active site. By recycling D-aminoacyl-tRNA to D-amino acids and free tRNA molecules, this enzyme counteracts the toxicity associated with the formation of D-aminoacyl-tRNA entities in vivo and helps enforce protein L-homochirality. The polypeptide is D-aminoacyl-tRNA deacylase (Aeromonas hydrophila subsp. hydrophila (strain ATCC 7966 / DSM 30187 / BCRC 13018 / CCUG 14551 / JCM 1027 / KCTC 2358 / NCIMB 9240 / NCTC 8049)).